The following is a 373-amino-acid chain: Glutamate 5-kinase (373 aa).

K15 contributes to the ATP binding site. 3 residues coordinate substrate: S55, D142, and N154. ATP is bound at residue T174 to D175. The PUA domain maps to R281–V359.

The protein belongs to the glutamate 5-kinase family.

The protein localises to the cytoplasm. The enzyme catalyses L-glutamate + ATP = L-glutamyl 5-phosphate + ADP. It functions in the pathway amino-acid biosynthesis; L-proline biosynthesis; L-glutamate 5-semialdehyde from L-glutamate: step 1/2. Functionally, catalyzes the transfer of a phosphate group to glutamate to form L-glutamate 5-phosphate. The protein is Glutamate 5-kinase of Nitrosomonas eutropha (strain DSM 101675 / C91 / Nm57).